Consider the following 127-residue polypeptide: Fluoride-specific ion channel FluC (127 aa).

The next 4 helical transmembrane spans lie at 4–24 (LLLV…VGVG), 36–56 (GTFT…SWLA), 72–92 (VGVL…ALMI), and 101–121 (FTYS…GLLV). Na(+) is bound by residues Gly-76 and Thr-79.

This sequence belongs to the fluoride channel Fluc/FEX (TC 1.A.43) family.

It localises to the cell inner membrane. It catalyses the reaction fluoride(in) = fluoride(out). Its activity is regulated as follows. Na(+) is not transported, but it plays an essential structural role and its presence is essential for fluoride channel function. Its function is as follows. Fluoride-specific ion channel. Important for reducing fluoride concentration in the cell, thus reducing its toxicity. This chain is Fluoride-specific ion channel FluC, found in Caulobacter vibrioides (strain ATCC 19089 / CIP 103742 / CB 15) (Caulobacter crescentus).